The sequence spans 228 residues: Endolytic peptidoglycan transglycosylase RlpA (228 aa).

The first 23 residues, 1–23 (MIQRHKLIVLIFLLIFCLSGCNT), serve as a signal peptide directing secretion.

The protein belongs to the RlpA family.

In terms of biological role, lytic transglycosylase with a strong preference for naked glycan strands that lack stem peptides. The protein is Endolytic peptidoglycan transglycosylase RlpA of Rickettsia felis (strain ATCC VR-1525 / URRWXCal2) (Rickettsia azadi).